The chain runs to 523 residues: MDPFHNGNKRSSISFGSSQRQPYNKNNYLSGTNGPSSAAQDQGRGPSPFGMSGNTTNGGNSKRNSGCDLSATYYASRSPMYSPLDFSPPVFSPNHSQLQQARGYAANIPVVSNLMNPSMASVCEYQSHYPLFGLDWSADDYVCLGSYKEDSRNKLQVLHSNDLLSWESVVDADVVYPVSKIQWVPSQLYPRKLATCSDSLRIWSVSPEERQFQEQINLSLCKYNRQHPANPAAADDMKVIGTFPPITSFDWNTVDTNLIISSSIDTTCIVWDLQSSHYVKTQLIAHDSEVFDVRFLTKSTQLFASCGGDGSVRVFDLRSLAHSTIIYEPPSSSVSGATAGTITPSSKGSDALLRLEPSPYDPNVLATFAADSNKIIILDMRNPESPILNLQGHGSSVNGIKWHPTKRNVLLSCGDDCQVLYWDLNSSFMEINAAGSKSPSIHGTSLEDPDGDTEMTDGGAGSGLNEDPLSLNNNSKQVCKTLETPNMMYANKTQEINNIAWRPQRGDWFGCVSGKKFQNVRVL.

Residues 1 to 64 (MDPFHNGNKR…TTNGGNSKRN (64 aa)) are disordered. Positions 9–40 (KRSSISFGSSQRQPYNKNNYLSGTNGPSSAAQ) are enriched in polar residues. At Ser-47 the chain carries Phosphoserine. Residues 52–64 (SGNTTNGGNSKRN) show a composition bias toward low complexity. The residue at position 65 (Ser-65) is a Phosphoserine. WD repeat units follow at residues 173-213 (DVVY…RQFQ), 241-281 (GTFP…YVKT), 285-325 (AHDS…HSTI), and 392-432 (GHGS…MEIN). The tract at residues 436–472 (SKSPSIHGTSLEDPDGDTEMTDGGAGSGLNEDPLSLN) is disordered.

Belongs to the WD repeat WDR68 family.

It localises to the cytoplasm. It is found in the nucleus. This is WD repeat-containing protein YPL247C from Saccharomyces cerevisiae (strain ATCC 204508 / S288c) (Baker's yeast).